The sequence spans 232 residues: 5'-methylthioadenosine/S-adenosylhomocysteine nucleosidase (232 aa).

Glu12 serves as the catalytic Proton acceptor. Substrate-binding positions include Gly78, Ile152, and 173-174 (ME). Asp197 (proton donor) is an active-site residue.

The protein belongs to the PNP/UDP phosphorylase family. MtnN subfamily. Homodimer.

It carries out the reaction S-adenosyl-L-homocysteine + H2O = S-(5-deoxy-D-ribos-5-yl)-L-homocysteine + adenine. The enzyme catalyses S-methyl-5'-thioadenosine + H2O = 5-(methylsulfanyl)-D-ribose + adenine. It catalyses the reaction 5'-deoxyadenosine + H2O = 5-deoxy-D-ribose + adenine. The protein operates within amino-acid biosynthesis; L-methionine biosynthesis via salvage pathway; S-methyl-5-thio-alpha-D-ribose 1-phosphate from S-methyl-5'-thioadenosine (hydrolase route): step 1/2. Its function is as follows. Catalyzes the irreversible cleavage of the glycosidic bond in both 5'-methylthioadenosine (MTA) and S-adenosylhomocysteine (SAH/AdoHcy) to adenine and the corresponding thioribose, 5'-methylthioribose and S-ribosylhomocysteine, respectively. Also cleaves 5'-deoxyadenosine, a toxic by-product of radical S-adenosylmethionine (SAM) enzymes, into 5-deoxyribose and adenine. Thus, is required for in vivo function of the radical SAM enzymes biotin synthase and lipoic acid synthase, that are inhibited by 5'-deoxyadenosine accumulation. This is 5'-methylthioadenosine/S-adenosylhomocysteine nucleosidase from Escherichia coli O9:H4 (strain HS).